The chain runs to 167 residues: Glutathione peroxidase 1 (167 aa).

The active site involves cysteine 41.

The protein belongs to the glutathione peroxidase family.

The catalysed reaction is 2 glutathione + H2O2 = glutathione disulfide + 2 H2O. Functionally, may constitute a glutathione peroxidase-like protective system against oxidative stresses. This is Glutathione peroxidase 1 (GPXHA-1) from Helianthus annuus (Common sunflower).